The following is a 104-amino-acid chain: DNA-directed RNA polymerase subunit omega (104 aa).

This sequence belongs to the RNA polymerase subunit omega family. As to quaternary structure, the RNAP catalytic core consists of 2 alpha, 1 beta, 1 beta' and 1 omega subunit. When a sigma factor is associated with the core the holoenzyme is formed, which can initiate transcription.

The catalysed reaction is RNA(n) + a ribonucleoside 5'-triphosphate = RNA(n+1) + diphosphate. Its function is as follows. Promotes RNA polymerase assembly. Latches the N- and C-terminal regions of the beta' subunit thereby facilitating its interaction with the beta and alpha subunits. The chain is DNA-directed RNA polymerase subunit omega from Streptococcus suis (strain 05ZYH33).